We begin with the raw amino-acid sequence, 223 residues long: Protein NrfC (223 aa).

The segment at residues 1–27 is a signal peptide (tat-type signal); it reads MTWSRRQFLTGVGVLAAVSGTAGRVVA. 3 consecutive 4Fe-4S ferredoxin-type domains span residues 37–65, 83–114, and 116–145; these read YGMVHDESLCIGCTACMDACREVNKVPEG, VKYRFFRKSCQHCDHAPCVDVCPTGASFRDAA, and GIVDVNPDLCVGCQYCIAACPYRVRFIHPV. The [4Fe-4S] cluster site is built by Cys-46, Cys-49, Cys-52, Cys-56, Cys-92, Cys-95, Cys-100, Cys-104, Cys-125, Cys-128, Cys-131, Cys-135, Cys-152, Cys-155, Cys-168, and Cys-172.

Post-translationally, predicted to be exported by the Tat system. The position of the signal peptide cleavage has not been experimentally proven.

In terms of biological role, probably involved in the transfer of electrons from the quinone pool to the type-c cytochromes. The chain is Protein NrfC (nrfC) from Escherichia coli O157:H7.